Consider the following 128-residue polypeptide: Ribonuclease P protein component 4 (128 aa).

Zn(2+) contacts are provided by cysteine 67, cysteine 70, cysteine 96, and cysteine 99.

This sequence belongs to the eukaryotic/archaeal RNase P protein component 4 family. Consists of a catalytic RNA component and at least 4-5 protein subunits. Zn(2+) is required as a cofactor.

Its subcellular location is the cytoplasm. The catalysed reaction is Endonucleolytic cleavage of RNA, removing 5'-extranucleotides from tRNA precursor.. Part of ribonuclease P, a protein complex that generates mature tRNA molecules by cleaving their 5'-ends. This is Ribonuclease P protein component 4 from Methanopyrus kandleri (strain AV19 / DSM 6324 / JCM 9639 / NBRC 100938).